The primary structure comprises 722 residues: uncharacterized protein (722 aa).

Active-site charge relay system residues include serine 575, aspartate 658, and histidine 691.

This sequence belongs to the peptidase S9B family.

This is an uncharacterized protein from Rickettsia prowazekii (strain Madrid E).